Consider the following 464-residue polypeptide: NADH dehydrogenase [ubiquinone] flavoprotein 1, mitochondrial (464 aa).

The transit peptide at 1–20 directs the protein to the mitochondrion; sequence MLAARRLLGWSLPARVSVRF. Lysine 81 carries the post-translational modification N6-acetyllysine; alternate. At lysine 81 the chain carries N6-succinyllysine; alternate. Residue 87-96 coordinates NADH; sequence GRGGAGFPTG. Residue lysine 104 is modified to N6-acetyllysine. Residue 199–247 participates in FMN binding; the sequence is RGAGAYICGEETALIESIEGKQGKPRLKPPFPADVGVFGCPTTVANVET. Arginine 257 carries the post-translational modification Omega-N-methylarginine. The residue at position 375 (lysine 375) is an N6-acetyllysine. [4Fe-4S] cluster contacts are provided by cysteine 379, cysteine 382, cysteine 385, and cysteine 425.

Belongs to the complex I 51 kDa subunit family. As to quaternary structure, core subunit of respiratory chain NADH dehydrogenase (Complex I) which is composed of 45 different subunits. This is a component of the flavoprotein-sulfur (FP) fragment of the enzyme. Interacts with RAB5IF. The cofactor is FMN. It depends on [4Fe-4S] cluster as a cofactor.

It localises to the mitochondrion inner membrane. It carries out the reaction a ubiquinone + NADH + 5 H(+)(in) = a ubiquinol + NAD(+) + 4 H(+)(out). Its function is as follows. Core subunit of the mitochondrial membrane respiratory chain NADH dehydrogenase (Complex I) which catalyzes electron transfer from NADH through the respiratory chain, using ubiquinone as an electron acceptor. Part of the peripheral arm of the enzyme, where the electrons from NADH are accepted by flavin mononucleotide (FMN) and then passed along a chain of iron-sulfur clusters by electron tunnelling to the final acceptor ubiquinone. Contains FMN, which is the initial electron acceptor as well as one iron-sulfur cluster. The chain is NADH dehydrogenase [ubiquinone] flavoprotein 1, mitochondrial from Pongo pygmaeus (Bornean orangutan).